Here is an 81-residue protein sequence, read N- to C-terminus: uncharacterized protein (81 aa).

A disordered region spans residues 55–81; that stretch reads LDKRNSNNKIEKSENTGENHDNNQDQK.

This is an uncharacterized protein from Thermoproteus tenax virus 1 (strain KRA1) (TTV1).